The sequence spans 441 residues: MKERSTELVQGFRHSVPYINAHRGKTFVIMLGGEAIEHANFSSIVNDIGLLHSLGIKLVVVYGARPQIDANLTTHHYEPHYHKNTRITDSATLELVKQAAGMLQLDITARLSMSLNNTPLQGAHINVVSGNFIIAQPLGVDDGVDYCHSGRIRRIDEEAVHRQLNSGAIVLLGPVAVSVTGESFNLTSEEVATQLAIKLKAEKMIGFCSSQGVTNEEGRIISELFPDDAQQRIDVLEQAGDYHSGTVRFLRGAVKACRSGVRRSHLISYQDDGALLQELFSRDGIGTQIVMESAEQVRRATINDIGGILELIRPLEEQGILVRRSREQLEMEIDKFTVVVRDNLTIACAALYPFPEESIGEMACVAVHPDYRSSSRGDMLLMRVAAQARQQGLQKLFVLTTHSIHWFQERGFLPAEVEMLPKKKQALYNYQRRSKILVLDL.

Residues 295 to 434 form the N-acetyltransferase domain; it reads EQVRRATIND…QALYNYQRRS (140 aa).

This sequence belongs to the acetyltransferase family. ArgA subfamily. In terms of assembly, homohexamer.

It localises to the cytoplasm. It carries out the reaction L-glutamate + acetyl-CoA = N-acetyl-L-glutamate + CoA + H(+). The protein operates within amino-acid biosynthesis; L-arginine biosynthesis; N(2)-acetyl-L-ornithine from L-glutamate: step 1/4. This chain is Amino-acid acetyltransferase, found in Pectobacterium atrosepticum (strain SCRI 1043 / ATCC BAA-672) (Erwinia carotovora subsp. atroseptica).